Here is a 231-residue protein sequence, read N- to C-terminus: Uracil phosphoribosyltransferase (231 aa).

38–42 lines the GTP pocket; it reads KGLVR. Residues arginine 87, arginine 112, and 140–148 contribute to the 5-phospho-alpha-D-ribose 1-diphosphate site; that span reads DPMIATGST. Uracil is bound by residues isoleucine 203 and 208–210; that span reads GDA. Residue aspartate 209 coordinates 5-phospho-alpha-D-ribose 1-diphosphate.

Belongs to the UPRTase family. Requires Mg(2+) as cofactor.

The enzyme catalyses UMP + diphosphate = 5-phospho-alpha-D-ribose 1-diphosphate + uracil. Its pathway is pyrimidine metabolism; UMP biosynthesis via salvage pathway; UMP from uracil: step 1/1. With respect to regulation, allosterically activated by GTP. In terms of biological role, catalyzes the conversion of uracil and 5-phospho-alpha-D-ribose 1-diphosphate (PRPP) to UMP and diphosphate. This Methanococcus maripaludis (strain DSM 14266 / JCM 13030 / NBRC 101832 / S2 / LL) protein is Uracil phosphoribosyltransferase.